We begin with the raw amino-acid sequence, 488 residues long: Facilitated trehalose transporter Tret1-2 homolog (488 aa).

Residues 1–28 (MKILMRADTHVSYSVPAEGTKANFTFSQ) lie on the Cytoplasmic side of the membrane. A helical membrane pass occupies residues 29–49 (VLAALSVSLCSLVVGFVSAYT). Topologically, residues 50 to 72 (SPALVSMTDRTITSFEVTKDAGS) are extracellular. A helical transmembrane segment spans residues 73 to 93 (WVGGIMPLAALAGGITGGPLI). Residues 94–105 (EYLGRRNTILAT) lie on the Cytoplasmic side of the membrane. A helical membrane pass occupies residues 106–126 (AVPFIVSSLLIACAVNVIMIL). Topologically, residues 127–129 (CGR) are extracellular. A helical membrane pass occupies residues 130–150 (FLTGFCVGIASLSLPVYLGET). Residues 151–160 (LQPEVRGTLG) are Cytoplasmic-facing. The helical transmembrane segment at 161-181 (LLPTALGNIGILVCYVAGSFM) threads the bilayer. The N-linked (GlcNAc...) asparagine glycan is linked to asparagine 182. Residues 182–184 (NWS) are Extracellular-facing. The helical transmembrane segment at 185–205 (ILAFLGAALPVPFLILMIIIP) threads the bilayer. At 206–268 (ETPRWFVNRG…ELFKRINLKP (63 aa)) the chain is on the cytoplasmic side. A helical membrane pass occupies residues 269–289 (LSISLGLMFFQQFSGINAVIF). Residues 290–305 (YTVQIFKDAGSTIDSN) are Extracellular-facing. The helical transmembrane segment at 306–326 (LCTIIVGIVNFFATFMGIILI) threads the bilayer. Residues 327 to 332 (DRLGRK) are Cytoplasmic-facing. The helical transmembrane segment at 333–353 (ILLYVSDIAMILTLSILGGFF) threads the bilayer. At 354–372 (YCKAHGPDVSHLGWLPLSC) the chain is on the extracellular side. A helical membrane pass occupies residues 373-393 (FVIYILGFSLGFGPIPWLMMG). Residues 394-402 (EILPAKIRG) are Cytoplasmic-facing. A helical membrane pass occupies residues 403–423 (PAASVVTAFNWFCTFVVTKTF). Residues 424–433 (QDLTVAMGPH) are Extracellular-facing. The helical transmembrane segment at 434-454 (GAFWLFGVVCIVGLFFVIIYV) threads the bilayer. The Cytoplasmic segment spans residues 455-488 (PETRGKSLEEIERKMMGRVPISAVVNIKPFSFNM).

The protein belongs to the major facilitator superfamily. Sugar transporter (TC 2.A.1.1) family. Trehalose transporter subfamily.

The protein localises to the cell membrane. Its function is as follows. Fails to transport trehalose. The chain is Facilitated trehalose transporter Tret1-2 homolog from Drosophila sechellia (Fruit fly).